Here is a 284-residue protein sequence, read N- to C-terminus: Tropomyosin alpha-1 chain (284 aa).

Residues 1-38 (MDAIKKKMQMLKLDKENALDRAEQAEADKKAAEERSKQ) are disordered. Residues 1–284 (MDAIKKKMQM…DHALNDMTSI (284 aa)) adopt a coiled-coil conformation. Positions 12-38 (KLDKENALDRAEQAEADKKAAEERSKQ) are enriched in basic and acidic residues.

Belongs to the tropomyosin family. As to quaternary structure, homodimer. Heterodimer of an alpha (TPM1, TPM3 or TPM4) and a beta (TPM2) chain. Interacts with HRG (via the HRR domain); the interaction contributes to the antiangiogenic properties of the histidine/proline-rich region (HRR) of HRG.

It is found in the cytoplasm. Its subcellular location is the cytoskeleton. Binds to actin filaments in muscle and non-muscle cells. Plays a central role, in association with the troponin complex, in the calcium dependent regulation of vertebrate striated muscle contraction. Smooth muscle contraction is regulated by interaction with caldesmon. In non-muscle cells is implicated in stabilizing cytoskeleton actin filaments. In Coturnix japonica (Japanese quail), this protein is Tropomyosin alpha-1 chain (TPM1).